We begin with the raw amino-acid sequence, 294 residues long: Eukaryotic translation initiation factor 3 subunit F (294 aa).

Positions 7–155 constitute an MPN domain; it reads VNVHPGVYMN…VRAYLRSKAG (149 aa).

The protein belongs to the eIF-3 subunit F family. As to quaternary structure, component of the eukaryotic translation initiation factor 3 (eIF-3) complex.

The protein localises to the cytoplasm. In terms of biological role, component of the eukaryotic translation initiation factor 3 (eIF-3) complex, which is involved in protein synthesis of a specialized repertoire of mRNAs and, together with other initiation factors, stimulates binding of mRNA and methionyl-tRNAi to the 40S ribosome. The eIF-3 complex specifically targets and initiates translation of a subset of mRNAs involved in cell proliferation. The protein is Eukaryotic translation initiation factor 3 subunit F of Caenorhabditis elegans.